The primary structure comprises 282 residues: Bifunctional protein FolD (282 aa).

Residues 165 to 167 (GRS) and S190 each bind NADP(+).

Belongs to the tetrahydrofolate dehydrogenase/cyclohydrolase family. Homodimer.

The enzyme catalyses (6R)-5,10-methylene-5,6,7,8-tetrahydrofolate + NADP(+) = (6R)-5,10-methenyltetrahydrofolate + NADPH. It carries out the reaction (6R)-5,10-methenyltetrahydrofolate + H2O = (6R)-10-formyltetrahydrofolate + H(+). It participates in one-carbon metabolism; tetrahydrofolate interconversion. Its function is as follows. Catalyzes the oxidation of 5,10-methylenetetrahydrofolate to 5,10-methenyltetrahydrofolate and then the hydrolysis of 5,10-methenyltetrahydrofolate to 10-formyltetrahydrofolate. The sequence is that of Bifunctional protein FolD from Acinetobacter baumannii (strain ATCC 17978 / DSM 105126 / CIP 53.77 / LMG 1025 / NCDC KC755 / 5377).